We begin with the raw amino-acid sequence, 136 residues long: Peptide methionine sulfoxide reductase MsrB (136 aa).

A MsrB domain is found at 7-129 (SSSHENTLTE…NSASLSFTDD (123 aa)). Residues Cys-46, Cys-49, Cys-95, and Cys-98 each coordinate Zn(2+). Catalysis depends on Cys-118, which acts as the Nucleophile.

It belongs to the MsrB Met sulfoxide reductase family. Requires Zn(2+) as cofactor.

The catalysed reaction is L-methionyl-[protein] + [thioredoxin]-disulfide + H2O = L-methionyl-(R)-S-oxide-[protein] + [thioredoxin]-dithiol. In Erwinia tasmaniensis (strain DSM 17950 / CFBP 7177 / CIP 109463 / NCPPB 4357 / Et1/99), this protein is Peptide methionine sulfoxide reductase MsrB.